The following is a 180-amino-acid chain: Chromosome-anchoring protein RacA (180 aa).

Positions 5-25 form a DNA-binding region, H-T-H motif; the sequence is TPFIAKKLGVSPKAVVRIAQQ. Residues 90–150 adopt a coiled-coil conformation; it reads HDFEQLAAQL…KLEAGLKKEE (61 aa).

Belongs to the RacA family.

Its subcellular location is the cytoplasm. Functionally, required for the formation of axial filaments and for anchoring the origin regions at the cell poles in sporulating cells, thus ensuring proper chromosome segregation in the prespore. Binds in a dispersed manner throughout the chromosome but preferentially to sites clustered in the origin portion of the chromosome, causing condensation of the chromosome and its remodeling into an elongated, anchored structure. The chain is Chromosome-anchoring protein RacA from Bacillus anthracis (strain A0248).